The primary structure comprises 338 residues: Probable replication factor C subunit 2 (338 aa).

60-67 lines the ATP pocket; sequence GPPGTGKT.

Belongs to the activator 1 small subunits family. In terms of assembly, heteropentamer of various rfc subunits that forms a complex (RFC) with PCNA in the presence of ATP.

The protein localises to the nucleus. Functionally, the elongation of primed DNA templates by DNA polymerase delta and epsilon requires the action of the accessory proteins PCNA and activator 1. This chain is Probable replication factor C subunit 2 (rfc2), found in Dictyostelium discoideum (Social amoeba).